Here is a 123-residue protein sequence, read N- to C-terminus: MSFTTSAQPRKQRRSLYKAPLHLRRKLFNAKLSPELAKKLGVKRLPVRRGDTVLILRGDFKGVTGKVVKVDLKRVRIYVEGATRTNSRGQTVYYPIHPSKVMIVDVDLSDKARQKIIERRKKK.

The protein belongs to the universal ribosomal protein uL24 family. In terms of assembly, part of the 50S ribosomal subunit.

In terms of biological role, one of two assembly initiator proteins, it binds directly to the 5'-end of the 23S rRNA, where it nucleates assembly of the 50S subunit. Functionally, located at the polypeptide exit tunnel on the outside of the subunit. The protein is Large ribosomal subunit protein uL24 of Pyrobaculum aerophilum (strain ATCC 51768 / DSM 7523 / JCM 9630 / CIP 104966 / NBRC 100827 / IM2).